We begin with the raw amino-acid sequence, 315 residues long: MSTPRIKAAIIGSGNIGTDLMIKIMRTSRHLEMGAMVGIDPKSDGLARAARLNVPVTHEGIEGLRRLPNYAEIGVVFDATSAKAHLTNNALLQKDGKKVIDLTPAAVGPFTIPAINGDANLEEPNVNMVTCGGQATIPMVYAVKRAVKRLVYGEIVASISSKSAGPGTRANIDEFTETTSKAIEVLGGAERGKAVIILNPAEPPLIMRDTVFTLSQGGDREAIEASILEMAETVKTYVPGYRLKQKVQFEVIGDNAPVRIPGIGTASGLKTTILLEVEGAAHYLPAYAGNLDIMTSAALVTADRWAARRLAKEAA.

Residue 13–16 coordinates NAD(+); that stretch reads SGNI. Catalysis depends on Cys-131, which acts as the Acyl-thioester intermediate. NAD(+)-binding positions include 163-171 and Asn-290; that span reads SAGPGTRAN.

It belongs to the acetaldehyde dehydrogenase family.

The catalysed reaction is acetaldehyde + NAD(+) + CoA = acetyl-CoA + NADH + H(+). The sequence is that of Acetaldehyde dehydrogenase from Xanthobacter autotrophicus (strain ATCC BAA-1158 / Py2).